Here is a 365-residue protein sequence, read N- to C-terminus: UDP-N-acetylglucosamine--N-acetylmuramyl-(pentapeptide) pyrophosphoryl-undecaprenol N-acetylglucosamine transferase (365 aa).

UDP-N-acetyl-alpha-D-glucosamine contacts are provided by residues 17–19 (TGG), asparagine 129, arginine 167, serine 194, isoleucine 250, 269–274 (ALTVSE), and glutamine 295.

Belongs to the glycosyltransferase 28 family. MurG subfamily.

It is found in the cell inner membrane. The enzyme catalyses di-trans,octa-cis-undecaprenyl diphospho-N-acetyl-alpha-D-muramoyl-L-alanyl-D-glutamyl-meso-2,6-diaminopimeloyl-D-alanyl-D-alanine + UDP-N-acetyl-alpha-D-glucosamine = di-trans,octa-cis-undecaprenyl diphospho-[N-acetyl-alpha-D-glucosaminyl-(1-&gt;4)]-N-acetyl-alpha-D-muramoyl-L-alanyl-D-glutamyl-meso-2,6-diaminopimeloyl-D-alanyl-D-alanine + UDP + H(+). It functions in the pathway cell wall biogenesis; peptidoglycan biosynthesis. In terms of biological role, cell wall formation. Catalyzes the transfer of a GlcNAc subunit on undecaprenyl-pyrophosphoryl-MurNAc-pentapeptide (lipid intermediate I) to form undecaprenyl-pyrophosphoryl-MurNAc-(pentapeptide)GlcNAc (lipid intermediate II). The polypeptide is UDP-N-acetylglucosamine--N-acetylmuramyl-(pentapeptide) pyrophosphoryl-undecaprenol N-acetylglucosamine transferase (Shewanella sediminis (strain HAW-EB3)).